Consider the following 89-residue polypeptide: Small ribosomal subunit protein bS20 (89 aa).

This sequence belongs to the bacterial ribosomal protein bS20 family.

Binds directly to 16S ribosomal RNA. This chain is Small ribosomal subunit protein bS20, found in Solidesulfovibrio magneticus (strain ATCC 700980 / DSM 13731 / RS-1) (Desulfovibrio magneticus).